The chain runs to 185 residues: Elongation factor P (185 aa).

This sequence belongs to the elongation factor P family.

It is found in the cytoplasm. The protein operates within protein biosynthesis; polypeptide chain elongation. Its function is as follows. Involved in peptide bond synthesis. Stimulates efficient translation and peptide-bond synthesis on native or reconstituted 70S ribosomes in vitro. Probably functions indirectly by altering the affinity of the ribosome for aminoacyl-tRNA, thus increasing their reactivity as acceptors for peptidyl transferase. The chain is Elongation factor P from Paraburkholderia phytofirmans (strain DSM 17436 / LMG 22146 / PsJN) (Burkholderia phytofirmans).